A 640-amino-acid polypeptide reads, in one-letter code: 1-deoxy-D-xylulose-5-phosphate synthase (640 aa).

Thiamine diphosphate-binding positions include histidine 79 and 120–122 (AHA). Residue aspartate 151 participates in Mg(2+) binding. Thiamine diphosphate is bound by residues 152–153 (GS), asparagine 180, tyrosine 287, and glutamate 369. Asparagine 180 serves as a coordination point for Mg(2+).

This sequence belongs to the transketolase family. DXPS subfamily. Homodimer. Requires Mg(2+) as cofactor. The cofactor is thiamine diphosphate.

The catalysed reaction is D-glyceraldehyde 3-phosphate + pyruvate + H(+) = 1-deoxy-D-xylulose 5-phosphate + CO2. It functions in the pathway metabolic intermediate biosynthesis; 1-deoxy-D-xylulose 5-phosphate biosynthesis; 1-deoxy-D-xylulose 5-phosphate from D-glyceraldehyde 3-phosphate and pyruvate: step 1/1. In terms of biological role, catalyzes the acyloin condensation reaction between C atoms 2 and 3 of pyruvate and glyceraldehyde 3-phosphate to yield 1-deoxy-D-xylulose-5-phosphate (DXP). In Hyphomonas neptunium (strain ATCC 15444), this protein is 1-deoxy-D-xylulose-5-phosphate synthase.